A 512-amino-acid chain; its full sequence is Cytochrome P450 monooxygenase hkm5 (512 aa).

A helical membrane pass occupies residues 18-38; it reads LIQLVRALLWVLVITIGGAIV. 5 N-linked (GlcNAc...) asparagine glycosylation sites follow: asparagine 184, asparagine 263, asparagine 275, asparagine 374, and asparagine 419. Cysteine 456 is a heme binding site.

Belongs to the cytochrome P450 family. Heme serves as cofactor.

The protein localises to the membrane. The enzyme catalyses hancockiamide A + reduced [NADPH--hemoprotein reductase] + O2 = hancockiamide G + oxidized [NADPH--hemoprotein reductase] + 2 H2O + H(+). It catalyses the reaction hancockiamide B + reduced [NADPH--hemoprotein reductase] + O2 = hancockiamide C + oxidized [NADPH--hemoprotein reductase] + 2 H2O + H(+). It carries out the reaction hancockiamide D + reduced [NADPH--hemoprotein reductase] + O2 = hancockiamide H + oxidized [NADPH--hemoprotein reductase] + 2 H2O + H(+). It participates in secondary metabolite biosynthesis. Functionally, cytochrome P450 monooxygenase; part of the gene cluster that mediates the biosynthesis of hancockiamides, an unusual new family of N-cinnamoylated piperazines. The NRPS hkm10 and the NmrA-like reductase hkm9 are proposed to convert two molecules of L-Phe to the intermediary piperazine called xenocockiamide A. Xenocockiamide A is then converted to hancockiamide D via a series of hydroxylations and O-methylations. The tyrosinase hkm6 may catalyze an aromatic hydroxylation, then the 2-oxoglutarate-dependent Fe(II) dioxygenase hkm4 and the FAD-dependent phenol hydroxylase hkm7 may catalyze consecutive hydroxylations to install 2 more hydroxy groups, and the methyltransferase hkm8 probably catalyzes two methylations using 2 molecules of S-adenosyl-L-methionine (SAM). The NRPS hkm11 activates and transfers trans-cinnamate supplied by the PAL hkm12 to hancockiamide D and produces hancockiamide A. NRPS Hkm11 has the flexibility to tolerate the bulky hancockiamide G as a substrate and the absence of the acetyl-transferase hkm3 opens up the opportunity for hkm11 to introduce a second N-cinnamoyl moiety. The cytochrome P450 monooxygenase hkm5 catalyzes the methylenedioxy bridge formation, converting hancockiamide A into hancockiamide G. Hkm5 can also convert hancockiamide B into hancockiamide C, and hancockiamide D into hancockiamide H. The N-acetyltransferase hkm3 finally transfers an acetyl group to 1-N of piperazine, converting hancockiamide A into hancockiamide B and hancockiamide G into hancockiamide C. This chain is Cytochrome P450 monooxygenase hkm5, found in Aspergillus hancockii.